The sequence spans 817 residues: Sorting nexin-29 (817 aa).

Positions S37–K181 constitute an RUN domain. Residues S269, S292, S293, S331, and S345 each carry the phosphoserine modification. Residues D271 to R299 form a disordered region. 2 disordered regions span residues K344–G381 and A417–A460. Residues D347–V358 show a composition bias toward acidic residues. The segment covering G369–L378 has biased composition (basic and acidic residues). A compositionally biased stretch (low complexity) spans S445–A460. S451 bears the Phosphoserine mark. A coiled-coil region spans residues M466–V546. The residue at position 641 (S641) is a Phosphoserine. A Phosphothreonine modification is found at T643. S644 and S648 each carry phosphoserine. The PX domain occupies A658–G781. Positions L784 to L817 are disordered.

The protein belongs to the sorting nexin family.

This chain is Sorting nexin-29 (SNX29), found in Bos taurus (Bovine).